Consider the following 688-residue polypeptide: Glycine--tRNA ligase beta subunit (688 aa).

Belongs to the class-II aminoacyl-tRNA synthetase family. As to quaternary structure, tetramer of two alpha and two beta subunits.

The protein localises to the cytoplasm. The enzyme catalyses tRNA(Gly) + glycine + ATP = glycyl-tRNA(Gly) + AMP + diphosphate. The chain is Glycine--tRNA ligase beta subunit from Clostridioides difficile (strain 630) (Peptoclostridium difficile).